A 150-amino-acid chain; its full sequence is Large ribosomal subunit protein bL9 (150 aa).

It belongs to the bacterial ribosomal protein bL9 family.

Functionally, binds to the 23S rRNA. This Shewanella putrefaciens (strain CN-32 / ATCC BAA-453) protein is Large ribosomal subunit protein bL9.